The following is a 353-amino-acid chain: Holliday junction branch migration complex subunit RuvB (353 aa).

The disordered stretch occupies residues 1-25; the sequence is MDPGPAGDEVSLAPQQETAEQDVET. The interval 1-188 is large ATPase domain (RuvB-L); sequence MDPGPAGDEV…FGFTAHMEFY (188 aa). ATP is bound by residues L27, R28, G69, K72, T73, S74, 135–137, R178, Y188, and R225; that span reads EDY. T73 contacts Mg(2+). The small ATPAse domain (RuvB-S) stretch occupies residues 189–259; it reads EPAELELVVR…VARAALEVYD (71 aa). The head domain (RuvB-H) stretch occupies residues 262–353; it reads EHGLDRLDRA…ATRSLFADEV (92 aa). R317 and R322 together coordinate DNA.

The protein belongs to the RuvB family. In terms of assembly, homohexamer. Forms an RuvA(8)-RuvB(12)-Holliday junction (HJ) complex. HJ DNA is sandwiched between 2 RuvA tetramers; dsDNA enters through RuvA and exits via RuvB. An RuvB hexamer assembles on each DNA strand where it exits the tetramer. Each RuvB hexamer is contacted by two RuvA subunits (via domain III) on 2 adjacent RuvB subunits; this complex drives branch migration. In the full resolvosome a probable DNA-RuvA(4)-RuvB(12)-RuvC(2) complex forms which resolves the HJ.

It localises to the cytoplasm. It catalyses the reaction ATP + H2O = ADP + phosphate + H(+). Its function is as follows. The RuvA-RuvB-RuvC complex processes Holliday junction (HJ) DNA during genetic recombination and DNA repair, while the RuvA-RuvB complex plays an important role in the rescue of blocked DNA replication forks via replication fork reversal (RFR). RuvA specifically binds to HJ cruciform DNA, conferring on it an open structure. The RuvB hexamer acts as an ATP-dependent pump, pulling dsDNA into and through the RuvAB complex. RuvB forms 2 homohexamers on either side of HJ DNA bound by 1 or 2 RuvA tetramers; 4 subunits per hexamer contact DNA at a time. Coordinated motions by a converter formed by DNA-disengaged RuvB subunits stimulates ATP hydrolysis and nucleotide exchange. Immobilization of the converter enables RuvB to convert the ATP-contained energy into a lever motion, pulling 2 nucleotides of DNA out of the RuvA tetramer per ATP hydrolyzed, thus driving DNA branch migration. The RuvB motors rotate together with the DNA substrate, which together with the progressing nucleotide cycle form the mechanistic basis for DNA recombination by continuous HJ branch migration. Branch migration allows RuvC to scan DNA until it finds its consensus sequence, where it cleaves and resolves cruciform DNA. The sequence is that of Holliday junction branch migration complex subunit RuvB from Saccharopolyspora erythraea (strain ATCC 11635 / DSM 40517 / JCM 4748 / NBRC 13426 / NCIMB 8594 / NRRL 2338).